Here is a 300-residue protein sequence, read N- to C-terminus: Bifunctional protein FolD (300 aa).

NADP(+) is bound by residues 168-170, Ser193, and Ile234; that span reads GRS.

This sequence belongs to the tetrahydrofolate dehydrogenase/cyclohydrolase family. In terms of assembly, homodimer.

It carries out the reaction (6R)-5,10-methylene-5,6,7,8-tetrahydrofolate + NADP(+) = (6R)-5,10-methenyltetrahydrofolate + NADPH. The enzyme catalyses (6R)-5,10-methenyltetrahydrofolate + H2O = (6R)-10-formyltetrahydrofolate + H(+). The protein operates within one-carbon metabolism; tetrahydrofolate interconversion. Catalyzes the oxidation of 5,10-methylenetetrahydrofolate to 5,10-methenyltetrahydrofolate and then the hydrolysis of 5,10-methenyltetrahydrofolate to 10-formyltetrahydrofolate. This is Bifunctional protein FolD from Ehrlichia canis (strain Jake).